The chain runs to 226 residues: ATP-dependent dethiobiotin synthetase BioD (226 aa).

12–17 (GIGKTV) contributes to the ATP binding site. Mg(2+) is bound at residue Thr-16. Lys-37 is an active-site residue. Residue Thr-41 participates in substrate binding. Residues Asp-49, 108-111 (EGAG), and 197-199 (PAG) contribute to the ATP site. Positions 49 and 108 each coordinate Mg(2+).

Belongs to the dethiobiotin synthetase family. As to quaternary structure, homodimer. Requires Mg(2+) as cofactor.

It is found in the cytoplasm. It carries out the reaction (7R,8S)-7,8-diammoniononanoate + CO2 + ATP = (4R,5S)-dethiobiotin + ADP + phosphate + 3 H(+). The protein operates within cofactor biosynthesis; biotin biosynthesis; biotin from 7,8-diaminononanoate: step 1/2. In terms of biological role, catalyzes a mechanistically unusual reaction, the ATP-dependent insertion of CO2 between the N7 and N8 nitrogen atoms of 7,8-diaminopelargonic acid (DAPA, also called 7,8-diammoniononanoate) to form a ureido ring. The chain is ATP-dependent dethiobiotin synthetase BioD from Mycolicibacterium vanbaalenii (strain DSM 7251 / JCM 13017 / BCRC 16820 / KCTC 9966 / NRRL B-24157 / PYR-1) (Mycobacterium vanbaalenii).